A 78-amino-acid chain; its full sequence is RNA-binding protein KhpA (78 aa).

The region spanning Thr-29–Arg-78 is the KH domain.

Belongs to the KhpA RNA-binding protein family.

It is found in the cytoplasm. Its function is as follows. A probable RNA-binding protein. This chain is RNA-binding protein KhpA, found in Chlamydia muridarum (strain MoPn / Nigg).